A 321-amino-acid polypeptide reads, in one-letter code: Lipoyl synthase (321 aa).

[4Fe-4S] cluster is bound by residues C68, C73, C79, C94, C98, C101, and S308. In terms of domain architecture, Radical SAM core spans 80-297 (FNHGTATFMI…KAEAMAMGFT (218 aa)).

This sequence belongs to the radical SAM superfamily. Lipoyl synthase family. [4Fe-4S] cluster is required as a cofactor.

Its subcellular location is the cytoplasm. The enzyme catalyses [[Fe-S] cluster scaffold protein carrying a second [4Fe-4S](2+) cluster] + N(6)-octanoyl-L-lysyl-[protein] + 2 oxidized [2Fe-2S]-[ferredoxin] + 2 S-adenosyl-L-methionine + 4 H(+) = [[Fe-S] cluster scaffold protein] + N(6)-[(R)-dihydrolipoyl]-L-lysyl-[protein] + 4 Fe(3+) + 2 hydrogen sulfide + 2 5'-deoxyadenosine + 2 L-methionine + 2 reduced [2Fe-2S]-[ferredoxin]. It functions in the pathway protein modification; protein lipoylation via endogenous pathway; protein N(6)-(lipoyl)lysine from octanoyl-[acyl-carrier-protein]: step 2/2. Catalyzes the radical-mediated insertion of two sulfur atoms into the C-6 and C-8 positions of the octanoyl moiety bound to the lipoyl domains of lipoate-dependent enzymes, thereby converting the octanoylated domains into lipoylated derivatives. In Yersinia enterocolitica serotype O:8 / biotype 1B (strain NCTC 13174 / 8081), this protein is Lipoyl synthase.